We begin with the raw amino-acid sequence, 663 residues long: DNA ligase (663 aa).

Residues 33-37 (DYSYD), 82-83 (SI), and Glu-112 contribute to the NAD(+) site. The active-site N6-AMP-lysine intermediate is Lys-114. Residues Arg-135, Glu-171, Lys-285, and Lys-309 each coordinate NAD(+). Residues Cys-403, Cys-406, Cys-419, and Cys-424 each contribute to the Zn(2+) site. Residues 581–663 (DKEAPLQGKV…LRILDAKSVS (83 aa)) enclose the BRCT domain.

This sequence belongs to the NAD-dependent DNA ligase family. LigA subfamily. Mg(2+) serves as cofactor. Mn(2+) is required as a cofactor.

It catalyses the reaction NAD(+) + (deoxyribonucleotide)n-3'-hydroxyl + 5'-phospho-(deoxyribonucleotide)m = (deoxyribonucleotide)n+m + AMP + beta-nicotinamide D-nucleotide.. Functionally, DNA ligase that catalyzes the formation of phosphodiester linkages between 5'-phosphoryl and 3'-hydroxyl groups in double-stranded DNA using NAD as a coenzyme and as the energy source for the reaction. It is essential for DNA replication and repair of damaged DNA. The protein is DNA ligase of Chlamydia trachomatis serovar A (strain ATCC VR-571B / DSM 19440 / HAR-13).